A 429-amino-acid polypeptide reads, in one-letter code: Ribosomal RNA small subunit methyltransferase B (429 aa).

Residues 254–260 (CSAPGGK), Asp277, Asp303, and Asp322 each bind S-adenosyl-L-methionine. The active-site Nucleophile is Cys375. Positions 397–419 (ALSETGTPDQPGQQNLPGGEEGD) are disordered. A compositionally biased stretch (polar residues) spans 400-412 (ETGTPDQPGQQNL).

The protein belongs to the class I-like SAM-binding methyltransferase superfamily. RsmB/NOP family.

The protein localises to the cytoplasm. It carries out the reaction cytidine(967) in 16S rRNA + S-adenosyl-L-methionine = 5-methylcytidine(967) in 16S rRNA + S-adenosyl-L-homocysteine + H(+). Specifically methylates the cytosine at position 967 (m5C967) of 16S rRNA. The polypeptide is Ribosomal RNA small subunit methyltransferase B (Salmonella dublin (strain CT_02021853)).